The primary structure comprises 265 residues: Bradykinin-potentiating and C-type natriuretic peptides (265 aa).

An N-terminal signal peptide occupies residues 1-23 (MVLSRLAASGLLLLALLALSVDG). Residues 24 to 30 (KPVQQWA) constitute a propeptide that is removed on maturation. At Gln31 the chain carries Pyrrolidone carboxylic acid. The propeptide occupies 44–50 (LKVQQWA). Gln51 carries the post-translational modification Pyrrolidone carboxylic acid. The propeptide occupies 64–70 (LTVQQWA). Position 71 is a pyrrolidone carboxylic acid (Gln71). The propeptide occupies 81 to 87 (LTVQQWA). Gln88 carries the post-translational modification Pyrrolidone carboxylic acid. The propeptide occupies 100-106 (LEVQQWA). At Gln107 the chain carries Pyrrolidone carboxylic acid. The propeptide occupies 118–120 (APL). Gln121 bears the Pyrrolidone carboxylic acid mark. Val126 is a propeptide. Gln127 is modified (pyrrolidone carboxylic acid). A propeptide spanning residues 132–241 (LLQPHESPAS…GGARRLKGLA (110 aa)) is cleaved from the precursor. Positions 153-211 (GPEAASGVPSAGAEVGRSGSKAPAAPHRLSKSKGAAATSAASRPMRDLRPDGKQARQNW) are disordered. A compositionally biased stretch (low complexity) spans 184–194 (SKGAAATSAAS). Over residues 196 to 206 (PMRDLRPDGKQ) the composition is skewed to basic and acidic residues. Cys249 and Cys265 are joined by a disulfide.

The protein in the N-terminal section; belongs to the bradykinin-potentiating peptide family. In the C-terminal section; belongs to the natriuretic peptide family. As to expression, expressed by the venom gland.

The protein localises to the secreted. Its subcellular location is the cytoplasm. The protein resides in the cytosol. Functionally, modestly inhibits ACE (with highest affinity for the N-site) and reveals strong bradykinin-potentiating activity. Induces nitric oxide (NO) production depended on muscarinic acetylcholine receptor M1 subtype (CHRM1) and bradykinin B2 receptor (BDKRB2) activation. Both these receptors contribute to the vasodilation induced by this peptide that may have an indirect action on BDKRB2 and a direct agonistic action on CHRM1. Its function is as follows. Peptide with several activities. It inhibits the activity of the angiotensin-converting enzyme (ACE) by a preferential interaction with its C-domain. It evokes transient hypotension (-14 mmHg) similar to that evoked by 0.5 ug of bradykinin, when injected alone into rats. It has a high bradykinin-potentiating effect (120%), when 60 nmol of BPP-10c are coinjected with 0.5 ug of bradykinin into rats. Does not affect angiotensin-1 pressor effects. Shows potent and long-lasting antihypertensive activity as well as a reduction of the heart rate. It also binds and dose-dependently promotes the activation of cytosolic argininosuccinate synthase (ASS1), an enzyme that catalyzes the conversion of citrulline, L-aspartate and ATP to argininosuccinate, AMP and pyrophosphate. It also enhances ASS1-dependent arginine production in HEK 293 cells, as well as in spontaneous hypertensive rat (SHR) and Wistar rat plasma. In addition, it induces the production of nitric-oxide (NO) by HUVEC cells via the endothelial nitric-oxide synthase (NOS3), which use arginine as a substrate and produce NO. It has been shown to be internalized by ASS1-expressing endothelial (HUVEC) and kidney (HEK 293) cells, and is detected homogenously distributed within the cell cytoplasm for up to 2 hours. Has a vasorelaxant activity in rat aortic strips and a diuretic potency in anesthetized rats. May act by activating natriuretic receptors (NPR1 and/or NPR2). The chain is Bradykinin-potentiating and C-type natriuretic peptides from Bothrops insularis (Golden lancehead).